A 1009-amino-acid polypeptide reads, in one-letter code: DENN domain-containing protein 1A (1009 aa).

The uDENN domain maps to 13–145; the sequence is FEVYVEVAYP…HKLPIPDPGV (133 aa). In terms of domain architecture, cDENN spans 162-298; that stretch reads ELPSIPENRN…VISSLKNRLK (137 aa). The region spanning 300–378 is the dDENN domain; that stretch reads VSTTTGDGVA…DGRLDLLNSG (79 aa). Residues 381–385 carry the FXDXF motif motif; the sequence is FSDVF. Positions 453–564 are disordered; sequence DIAENGCAPT…TGPVPAPPDR (112 aa). Position 473 is a phosphoserine (S473). The span at 477–489 shows a compositional bias: basic and acidic residues; that stretch reads EAKDPKLREDRRP. The span at 500–509 shows a compositional bias: basic residues; it reads PRPHVVKRPK. Phosphothreonine is present on T519. Phosphoserine occurs at positions 520, 523, 536, 538, and 546. Positions 569-578 match the Clathrin box motif; the sequence is DLLEDVFSNL. The residue at position 592 (S592) is a Phosphoserine. The segment at 648 to 714 is disordered; the sequence is IPSKPPAASP…RKTPELGIVP (67 aa). S749 is modified (phosphoserine). Disordered stretches follow at residues 796-831 and 928-1009; these read STLPSRPATPNVATPFTPQFSFPPAGTPTPFPQPPL and RSSA…ETFE. 2 stretches are compositionally biased toward pro residues: residues 820 to 831 and 945 to 957; these read AGTPTPFPQPPL and GDPPLLPPRPPQG. The span at 972–983 shows a compositional bias: basic and acidic residues; it reads DPFEDLLQKTKQ. A compositionally biased stretch (low complexity) spans 986 to 997; that stretch reads SPSPALAPAPDS. The segment covering 999–1009 has biased composition (basic and acidic residues); that stretch reads EQLRKQWETFE.

As to quaternary structure, interacts with RAB35. Interacts with clathrin and with the adapter protein complex 2, AP-2. Interacts with ITSN1 and SH3GL2. Interacts (when phosphorylated) with YWHAE. Phosphorylated on serine and/or threonine in an Akt-dependent manner. Phosphorylation probably regulates the guanine nucleotide exchange factor (GEF) activity, possibly by disrupting an intramolecular interaction between the DENN domain and the C-terminus of the protein, thereby relieving the autoinhibition.

It is found in the cytoplasmic vesicle. It localises to the clathrin-coated vesicle membrane. The protein localises to the presynaptic cell membrane. Its activity is regulated as follows. The guanine nucleotide exchange factor (GEF) activity is autoinhibited. Autoinhibition may be the result of intramolecular interaction between the DENN domain and the C-terminus, which is disrupted upon phosphorylation. Activation is regulated by Akt activation. Functionally, guanine nucleotide exchange factor (GEF) regulating clathrin-mediated endocytosis through RAB35 activation. Promotes the exchange of GDP to GTP, converting inactive GDP-bound RAB35 into its active GTP-bound form. Regulates clathrin-mediated endocytosis of synaptic vesicles and mediates exit from early endosomes. Binds phosphatidylinositol-phosphates (PtdInsPs), with some preference for PtdIns(3)P. The protein is DENN domain-containing protein 1A of Homo sapiens (Human).